We begin with the raw amino-acid sequence, 388 residues long: Oligogalacturonide lyase (388 aa).

It is found in the periplasm. The enzyme catalyses 4-(4-deoxy-alpha-D-galact-4-enuronosyl)-D-galacturonate = 2 5-dehydro-4-deoxy-D-glucuronate. It functions in the pathway glycan metabolism; pectin degradation; 2-dehydro-3-deoxy-D-gluconate from pectin: step 3/5. Functionally, involved in degradation of pectin, which causes soft-rod disease in plants. This Pectobacterium atrosepticum (strain SCRI 1043 / ATCC BAA-672) (Erwinia carotovora subsp. atroseptica) protein is Oligogalacturonide lyase (ogl).